The primary structure comprises 532 residues: Probable galacturonosyltransferase 14 (532 aa).

Residues 1–40 are Cytoplasmic-facing; sequence MQLHISPSMRSITISSSNEFIDLMKIKVAARHISYRTLFH. Residues 41–61 form a helical; Signal-anchor for type II membrane protein membrane-spanning segment; that stretch reads TILILAFLLPFVFILTAVVTL. Residues 62 to 532 lie on the Lumenal side of the membrane; sequence EGVNKCSSID…DFIKNCHILE (471 aa). N-linked (GlcNAc...) asparagine glycosylation is found at Asn305, Asn395, Asn444, and Asn519.

This sequence belongs to the glycosyltransferase 8 family. Expressed in roots, inflorescences, siliques, leaves and stems. Accumulates in pollen grains.

The protein resides in the golgi apparatus membrane. Its pathway is glycan metabolism; pectin biosynthesis. In terms of biological role, may be involved in pectin and/or xylans biosynthesis in cell walls. Together with GAUT13, required for pollen tube growth, possibly through the regulation of pectin biosynthesis and repartition in the pollen tube wall. This chain is Probable galacturonosyltransferase 14, found in Arabidopsis thaliana (Mouse-ear cress).